We begin with the raw amino-acid sequence, 256 residues long: UPF0246 protein Sde_3824 (256 aa).

It belongs to the UPF0246 family.

This chain is UPF0246 protein Sde_3824, found in Saccharophagus degradans (strain 2-40 / ATCC 43961 / DSM 17024).